The following is a 278-amino-acid chain: Alpha-tocopherol transfer protein (278 aa).

A CRAL-TRIO domain is found at Arg88–Glu253. A 1,2-diacyl-sn-glycero-3-phospho-(1D-myo-inositol-3,4-bisphosphate) is bound at residue Asp185. Phe187 lines the (+)-alpha-tocopherol pocket. Lys190–Arg192 contributes to the a 1,2-diacyl-sn-glycero-3-phospho-(1D-myo-inositol-3,4-bisphosphate) binding site. Residue Ser208–Lys211 participates in a 1,2-diacyl-sn-glycero-3-phospho-(1D-myo-inositol-4,5-bisphosphate) binding. Residues Lys217 and Arg221 each contribute to the a 1,2-diacyl-sn-glycero-3-phospho-(1D-myo-inositol-3,4-bisphosphate) site.

In terms of assembly, monomer and homotetramer. Phosphatidylinositol 4,5-bisphosphate binding induces the formation of homotetramers. Phosphatidylinositol 3,4-bisphosphate is less efficient in inducing tetramerization.

Its subcellular location is the cytoplasm. In terms of biological role, binds (+)-alpha-tocopherol, enhances its transfer between separate membranes, and stimulates its release from liver cells. Binds both phosphatidylinositol 3,4-bisphosphate and phosphatidylinositol 4,5-bisphosphate; the resulting conformation change is important for the release of the bound alpha-tocopherol. The protein is Alpha-tocopherol transfer protein (Ttpa) of Mus musculus (Mouse).